A 333-amino-acid polypeptide reads, in one-letter code: Leukocyte cell-derived chemotaxin 1 (333 aa).

Residues 42 to 62 (VGAVVLISGAVLLLFGAIGAF) traverse the membrane as a helical segment. One can recognise a BRICHOS domain in the interval 104–201 (GSGAEEAIEV…LCGDLPIFWL (98 aa)). Cys-131 and Cys-193 are joined by a disulfide. A propeptide spanning residues 211 to 214 (RERR) is cleaved from the precursor. Positions 212–269 (ERREVVRKTVPTTTKRPHSGPRGNPGPARMRNDSRPSVQEDSEPFNPDNPYHQEGESM) are disordered. A glycan (N-linked (GlcNAc...) asparagine) is linked at Asn-243. 4 disulfide bridges follow: Cys-281–Cys-285, Cys-282–Cys-322, Cys-292–Cys-316, and Cys-296–Cys-312.

The protein belongs to the chondromodulin-1 family. After cleavage, the post-translationally modified ChM-I is secreted as a glycoprotein.

The protein localises to the secreted. It is found in the extracellular space. The protein resides in the extracellular matrix. Its subcellular location is the endomembrane system. Its function is as follows. Bifunctional growth regulator that stimulates the growth of cultured chondrocytes in the presence of basic fibroblast growth factor (FGF) but inhibits the growth of cultured vascular endothelial cells. May contribute to the rapid growth of cartilage and vascular invasion prior to the replacement of cartilage by bone during endochondral bone development. Inhibits in vitro tube formation and mobilization of endothelial cells. Plays a role as antiangiogenic factor in cardiac valves to suppress neovascularization. In Oryctolagus cuniculus (Rabbit), this protein is Leukocyte cell-derived chemotaxin 1.